Here is a 228-residue protein sequence, read N- to C-terminus: Cytochrome c oxidase subunit 2 (228 aa).

Topologically, residues 1–26 (MATWANLGLQDSSSPLMEQLNFFHDH) are mitochondrial intermembrane. The chain crosses the membrane as a helical span at residues 27–48 (TLLILTMITILVGYIMGMLSFN). Residues 49-62 (KFTNRFLLHGQTIE) lie on the Mitochondrial matrix side of the membrane. The chain crosses the membrane as a helical span at residues 63–82 (IIWTVLPAIILMFIAFPSLR). Over 83–228 (LLYLMDEINT…FIKWITSMTN (146 aa)) the chain is Mitochondrial intermembrane. Cu cation contacts are provided by H161, C196, E198, C200, H204, and M207. A Mg(2+)-binding site is contributed by E198.

This sequence belongs to the cytochrome c oxidase subunit 2 family. As to quaternary structure, component of the cytochrome c oxidase (complex IV, CIV), a multisubunit enzyme composed of a catalytic core of 3 subunits and several supernumerary subunits. The complex exists as a monomer or a dimer and forms supercomplexes (SCs) in the inner mitochondrial membrane with ubiquinol-cytochrome c oxidoreductase (cytochrome b-c1 complex, complex III, CIII). Cu cation serves as cofactor.

It localises to the mitochondrion inner membrane. The enzyme catalyses 4 Fe(II)-[cytochrome c] + O2 + 8 H(+)(in) = 4 Fe(III)-[cytochrome c] + 2 H2O + 4 H(+)(out). Functionally, component of the cytochrome c oxidase, the last enzyme in the mitochondrial electron transport chain which drives oxidative phosphorylation. The respiratory chain contains 3 multisubunit complexes succinate dehydrogenase (complex II, CII), ubiquinol-cytochrome c oxidoreductase (cytochrome b-c1 complex, complex III, CIII) and cytochrome c oxidase (complex IV, CIV), that cooperate to transfer electrons derived from NADH and succinate to molecular oxygen, creating an electrochemical gradient over the inner membrane that drives transmembrane transport and the ATP synthase. Cytochrome c oxidase is the component of the respiratory chain that catalyzes the reduction of oxygen to water. Electrons originating from reduced cytochrome c in the intermembrane space (IMS) are transferred via the dinuclear copper A center (CU(A)) of subunit 2 and heme A of subunit 1 to the active site in subunit 1, a binuclear center (BNC) formed by heme A3 and copper B (CU(B)). The BNC reduces molecular oxygen to 2 water molecules using 4 electrons from cytochrome c in the IMS and 4 protons from the mitochondrial matrix. This Anopheles gambiae (African malaria mosquito) protein is Cytochrome c oxidase subunit 2 (COII).